The chain runs to 341 residues: Anthranilate phosphoribosyltransferase (341 aa).

5-phospho-alpha-D-ribose 1-diphosphate-binding positions include Gly-79, 82 to 83, Thr-87, 89 to 92, 107 to 115, and Ser-119; these read GD, NIST, and KHGNRAVSS. Anthranilate is bound at residue Gly-79. Ser-91 contributes to the Mg(2+) binding site. An anthranilate-binding site is contributed by Asn-110. Residue Arg-165 participates in anthranilate binding. Positions 224 and 225 each coordinate Mg(2+).

The protein belongs to the anthranilate phosphoribosyltransferase family. Homodimer. It depends on Mg(2+) as a cofactor.

The enzyme catalyses N-(5-phospho-beta-D-ribosyl)anthranilate + diphosphate = 5-phospho-alpha-D-ribose 1-diphosphate + anthranilate. Its pathway is amino-acid biosynthesis; L-tryptophan biosynthesis; L-tryptophan from chorismate: step 2/5. In terms of biological role, catalyzes the transfer of the phosphoribosyl group of 5-phosphorylribose-1-pyrophosphate (PRPP) to anthranilate to yield N-(5'-phosphoribosyl)-anthranilate (PRA). In Bacillus cereus (strain AH187), this protein is Anthranilate phosphoribosyltransferase.